A 227-amino-acid chain; its full sequence is Ribosomal RNA large subunit methyltransferase E (227 aa).

Gly-78, Trp-80, Asp-103, Asp-119, and Asp-143 together coordinate S-adenosyl-L-methionine. Lys-183 acts as the Proton acceptor in catalysis.

Belongs to the class I-like SAM-binding methyltransferase superfamily. RNA methyltransferase RlmE family.

The protein resides in the cytoplasm. The catalysed reaction is uridine(2552) in 23S rRNA + S-adenosyl-L-methionine = 2'-O-methyluridine(2552) in 23S rRNA + S-adenosyl-L-homocysteine + H(+). Its function is as follows. Specifically methylates the uridine in position 2552 of 23S rRNA at the 2'-O position of the ribose in the fully assembled 50S ribosomal subunit. The polypeptide is Ribosomal RNA large subunit methyltransferase E (Rickettsia akari (strain Hartford)).